Here is a 96-residue protein sequence, read N- to C-terminus: Protein Vpr (96 aa).

The interval 1–42 is homooligomerization; that stretch reads MEQAPEDQGPQREPYNEWTLDLLEELKNEAVRHFPRPWLHSL. Serine 79, serine 94, and serine 96 each carry phosphoserine; by host.

Belongs to the HIV-1 VPR protein family. Homooligomer, may form homodimer. Interacts with p6-gag region of the Pr55 Gag precursor protein through a (Leu-X-X)4 motif near the C-terminus of the P6gag protein. Interacts with host UNG. May interact with host RAD23A/HHR23A. Interacts with host VPRBP/DCAF1, leading to hijack the CUL4A-RBX1-DDB1-DCAF1/VPRBP complex, mediating ubiquitination of host proteins such as TERT and ZGPAT and arrest of the cell cycle in G2 phase. Post-translationally, phosphorylated on several residues by host. These phosphorylations regulate VPR activity for the nuclear import of the HIV-1 pre-integration complex.

It localises to the virion. It is found in the host nucleus. The protein localises to the host extracellular space. Functionally, during virus replication, may deplete host UNG protein, and incude G2-M cell cycle arrest. Acts by targeting specific host proteins for degradation by the 26S proteasome, through association with the cellular CUL4A-DDB1 E3 ligase complex by direct interaction with host VPRPB/DCAF-1. Cell cycle arrest reportedly occurs within hours of infection and is not blocked by antiviral agents, suggesting that it is initiated by the VPR carried into the virion. Additionally, VPR induces apoptosis in a cell cycle dependent manner suggesting that these two effects are mechanistically linked. Detected in the serum and cerebrospinal fluid of AIDS patient, VPR may also induce cell death to bystander cells. Its function is as follows. During virus entry, plays a role in the transport of the viral pre-integration (PIC) complex to the host nucleus. This function is crucial for viral infection of non-dividing macrophages. May act directly at the nuclear pore complex, by binding nucleoporins phenylalanine-glycine (FG)-repeat regions. The protein is Protein Vpr of Human immunodeficiency virus type 1 group M subtype F1 (isolate 93BR020) (HIV-1).